A 959-amino-acid chain; its full sequence is rDNA transcriptional regulator pol5 (959 aa).

S742 and S743 each carry phosphoserine. Positions 936–959 are disordered; that stretch reads HQQTSTAASSPQKTGHHENEKTNH. Over residues 937-948 the composition is skewed to polar residues; sequence QQTSTAASSPQK. The span at 950 to 959 shows a compositional bias: basic and acidic residues; the sequence is GHHENEKTNH.

Belongs to the MYBBP1A family. As to quaternary structure, interacts with cdc10.

Its subcellular location is the nucleus. Plays an important role in the regulation of rRNA transcription. Binds to rDNA promoter fragments. This chain is rDNA transcriptional regulator pol5 (pol5), found in Schizosaccharomyces pombe (strain 972 / ATCC 24843) (Fission yeast).